Reading from the N-terminus, the 218-residue chain is Very-long-chain (3R)-3-hydroxyacyl-CoA dehydratase (218 aa).

The Cytoplasmic segment spans residues 1–6; sequence MKTYLS. A helical transmembrane segment spans residues 7–29; that stretch reads IYYLIQFCGHSWIFTNMTTRFLF. The Lumenal portion of the chain corresponds to 30-38; that stretch reads FGQDAFADT. The helical transmembrane segment at 39–61 threads the bilayer; that stretch reads FYSIGLVMQGCQLLSILELAHIL. Over 62-67 the chain is Cytoplasmic; the sequence is LGVEQN. The chain crosses the membrane as a helical span at residues 68-87; the sequence is GFLPMFLQVAERFIILFVVI. Over 88–96 the chain is Lumenal; the sequence is TSQEEVQSK. A helical membrane pass occupies residues 97-116; sequence YIVCALFFIWNLWDVIRYPY. The Cytoplasmic segment spans residues 117–136; the sequence is DMLAAVDTDYSALTWLRHTW. A helical transmembrane segment spans residues 137-159; the sequence is WIVAYPLSVLAEAYTIYESLPYF. Residues Tyr141 and Glu148 contribute to the active site. At 160-178 the chain is on the lumenal side; it reads ESLGTYSFKMALPVSLSFH. A helical transmembrane segment spans residues 179–201; that stretch reads FPYILTLYLVLQPVGMLYICSCL. At 202 to 218 the chain is on the cytoplasmic side; that stretch reads WSERKQYFQRKLKLKKN.

This sequence belongs to the very long-chain fatty acids dehydratase HACD family.

The protein localises to the endoplasmic reticulum membrane. The catalysed reaction is a very-long-chain (3R)-3-hydroxyacyl-CoA = a very-long-chain (2E)-enoyl-CoA + H2O. It carries out the reaction (3R)-hydroxyhexadecanoyl-CoA = (2E)-hexadecenoyl-CoA + H2O. The protein operates within lipid metabolism; fatty acid biosynthesis. Functionally, catalyzes the third of the four reactions of the long-chain fatty acids elongation cycle. This endoplasmic reticulum-bound enzymatic process, allows the addition of two carbons to the chain of long- and very long-chain fatty acids/VLCFAs per cycle. This enzyme catalyzes the dehydration of the 3-hydroxyacyl-CoA intermediate into trans-2,3-enoyl-CoA, within each cycle of fatty acid elongation. Thereby, it participates in the production of VLCFAs of different chain lengths that are involved in multiple biological processes as precursors of membrane lipids and lipid mediators. The chain is Very-long-chain (3R)-3-hydroxyacyl-CoA dehydratase from Xenopus laevis (African clawed frog).